A 294-amino-acid chain; its full sequence is MNILENINTEKRNPRSLNLDSMSIAEAVSLMIDEEYGVIEALKEQHRNITEVILATSYSLRNGGRIIYIGAGTSGRLGILDAVECPPTFSVDYNTIVGLIAGGEKAFIQAQEGAEDDANFGKEDLQSINLTAKDIVIGIAASGRTPYVIGALEYANSIGATTVAISCTKQAKISKYAKYSIEAVPGPEVLTGSTRLKAGTTQKLILNMISTLSMVSVGKVYQNLMVDVKPTNQKLIERSKNIVCEATGVDYTTAEKFYLKANKSVKVAIVMILNNCDYEKALAILKNNNNFIKS.

In terms of domain architecture, SIS spans 56-219; that stretch reads TSYSLRNGGR…STLSMVSVGK (164 aa). E84 acts as the Proton donor in catalysis. Residue E115 is part of the active site.

Belongs to the GCKR-like family. MurNAc-6-P etherase subfamily. Homodimer.

It catalyses the reaction N-acetyl-D-muramate 6-phosphate + H2O = N-acetyl-D-glucosamine 6-phosphate + (R)-lactate. It participates in amino-sugar metabolism; 1,6-anhydro-N-acetylmuramate degradation. The protein operates within amino-sugar metabolism; N-acetylmuramate degradation. It functions in the pathway cell wall biogenesis; peptidoglycan recycling. Functionally, specifically catalyzes the cleavage of the D-lactyl ether substituent of MurNAc 6-phosphate, producing GlcNAc 6-phosphate and D-lactate. Together with AnmK, is also required for the utilization of anhydro-N-acetylmuramic acid (anhMurNAc) either imported from the medium or derived from its own cell wall murein, and thus plays a role in cell wall recycling. This is N-acetylmuramic acid 6-phosphate etherase from Francisella tularensis subsp. tularensis (strain SCHU S4 / Schu 4).